A 547-amino-acid chain; its full sequence is Inositol 1,4,5-trisphosphate receptor-interacting protein-like 1 (547 aa).

The first 22 residues, 1–22, serve as a signal peptide directing secretion; the sequence is MAVISLMFLAVMYVVHHPLMVS. At 23–96 the chain is on the extracellular side; that stretch reads DRMDLDTLAR…PFQAGGQDGG (74 aa). Positions 28–66 form a coiled coil; sequence DTLARSRQLEKRMSEEMRQLEMEFEERSRAAEQKQKVEN. A helical membrane pass occupies residues 97-117; sequence PLGWILGNLWNAGLFCLFLIF. The Cytoplasmic segment spans residues 118 to 547; it reads ELLRQSMQHE…LPCSPVAGGL (430 aa).

It belongs to the ITPRIP family.

The protein localises to the cell membrane. Functions as a ligand of CD3E, inhibiting TCR-CD3 complex signaling to regulate T cell activation. Induces stable CD3E-NCK1 binding, thereby preventing the CD3E-ZAP70 interaction and subsequently inhibiting the activation of the downstream ERK-NFkB signaling cascade and calcium influx. This Mus musculus (Mouse) protein is Inositol 1,4,5-trisphosphate receptor-interacting protein-like 1 (Itpripl1).